The primary structure comprises 1509 residues: Myosin-2 heavy chain, non muscle (1509 aa).

The Myosin N-terminal SH3-like domain occupies 32–85 (SDKTLAWWPTKDADRAFCHVEVTKDDGKNFTVRLENGEEKSQPKNEKNFLGVNP). The Myosin motor domain maps to 89 to 787 (DGVEDMGELG…QLAAIEELRE (699 aa)). N6,N6,N6-trimethyllysine is present on lysine 133. Residue 182–189 (GESGAGKT) coordinates ATP. Residues 623–643 (APAEEEKAAAGGSRNRSTGRG) form a disordered region. Actin-binding stretches follow at residues 660 to 682 (LAHL…IPNL) and 766 to 780 (RFGV…GQLA). In terms of domain architecture, IQ spans 790-819 (ISKMVVSIQAGARAFLARRMYDKMREQTVS). Positions 848–1226 (LISQRNFQKE…AERDSGAQQR (379 aa)) are alpha-helical tailpiece (S2). The stretch at 848–1509 (LISQRNFQKE…VRAGSARAEE (662 aa)) forms a coiled coil. 5 stretches are compositionally biased toward basic and acidic residues: residues 958–1019 (ELKA…KDAL), 1034–1047 (KNTE…RNEL), 1097–1107 (EDARSEVDSLK), 1115–1141 (KSLK…RANV), and 1179–1189 (QVDETKRRLEE). Disordered regions lie at residues 958–1049 (ELKA…ELDD), 1068–1141 (LAQT…RANV), 1170–1195 (AAQA…ASAA), 1213–1259 (ADLD…RLEG), 1352–1425 (VAKE…NREL), and 1474–1509 (QLQD…RAEE). The tract at residues 1227-1252 (RKLNTRISELQSELENAPKTGGASSE) is hinge. The segment covering 1231–1240 (TRISELQSEL) has biased composition (polar residues). An alpha-helical tailpiece (LMM) region spans residues 1253–1482 (EVKRLEGELE…AQLQDEIDGT (230 aa)). The tract at residues 1253 to 1509 (EVKRLEGELE…VRAGSARAEE (257 aa)) is light meromyosin (LMM). A nonhelical tailpiece region spans residues 1483 to 1509 (PSSRGGSTRGASARGASVRAGSARAEE). Low complexity predominate over residues 1484–1509 (SSRGGSTRGASARGASVRAGSARAEE). Phosphoserine is present on residues serine 1489, serine 1494, and serine 1499.

It belongs to the TRAFAC class myosin-kinesin ATPase superfamily. Myosin family. In terms of assembly, myosin II heavy chain is two-headed. It self-assembles into filaments. Hexamer of 2 heavy chain subunits (MHC), 2 alkali light chain subunits (MLC) and 2 regulatory light chain subunits (MLC-2).

Functionally, myosin is a protein that binds to F-actin and has ATPase activity that is activated by F-actin. This Acanthamoeba castellanii (Amoeba) protein is Myosin-2 heavy chain, non muscle.